The primary structure comprises 178 residues: GTP-dependent dephospho-CoA kinase (178 aa).

Residues Asp55, Val57, Asp74, Lys76, and Glu127 each contribute to the GTP site.

The protein belongs to the GTP-dependent DPCK family.

It carries out the reaction 3'-dephospho-CoA + GTP = GDP + CoA + H(+). The protein operates within cofactor biosynthesis; coenzyme A biosynthesis. Its function is as follows. Catalyzes the GTP-dependent phosphorylation of the 3'-hydroxyl group of dephosphocoenzyme A to form coenzyme A (CoA). The sequence is that of GTP-dependent dephospho-CoA kinase from Saccharolobus islandicus (strain Y.N.15.51 / Yellowstone #2) (Sulfolobus islandicus).